The following is a 274-amino-acid chain: Protein YehF (274 aa).

One can recognise a WGR domain in the interval 2–78 (RHFIYQDEKS…KDNSLQPSQT (77 aa)).

Has been implicated in selenate reduction; a mini-Tn10 insertion mutant in 'molR', (which was mapped to 47.3 centisomes i.e. this locus), is defective in the reduction of selenate. This chain is Protein YehF (yehF), found in Escherichia coli (strain K12).